The sequence spans 330 residues: Ketol-acid reductoisomerase (NADP(+)) (330 aa).

In terms of domain architecture, KARI N-terminal Rossmann spans 1-181; it reads MNIYYEQDAD…GGTKAGVIET (181 aa). NADP(+) is bound by residues 24–27, K47, S50, S52, and 82–85; these read YGSQ and DQTQ. Residue H107 is part of the active site. G133 serves as a coordination point for NADP(+). Residues 182–327 enclose the KARI C-terminal knotted domain; that stretch reads SFKDETETDL…AKLRGMMSWL (146 aa). Residues D190, E194, E226, and E230 each coordinate Mg(2+). Residue S251 coordinates substrate.

This sequence belongs to the ketol-acid reductoisomerase family. Mg(2+) is required as a cofactor.

It carries out the reaction (2R)-2,3-dihydroxy-3-methylbutanoate + NADP(+) = (2S)-2-acetolactate + NADPH + H(+). It catalyses the reaction (2R,3R)-2,3-dihydroxy-3-methylpentanoate + NADP(+) = (S)-2-ethyl-2-hydroxy-3-oxobutanoate + NADPH + H(+). The protein operates within amino-acid biosynthesis; L-isoleucine biosynthesis; L-isoleucine from 2-oxobutanoate: step 2/4. It functions in the pathway amino-acid biosynthesis; L-valine biosynthesis; L-valine from pyruvate: step 2/4. Involved in the biosynthesis of branched-chain amino acids (BCAA). Catalyzes an alkyl-migration followed by a ketol-acid reduction of (S)-2-acetolactate (S2AL) to yield (R)-2,3-dihydroxy-isovalerate. In the isomerase reaction, S2AL is rearranged via a Mg-dependent methyl migration to produce 3-hydroxy-3-methyl-2-ketobutyrate (HMKB). In the reductase reaction, this 2-ketoacid undergoes a metal-dependent reduction by NADPH to yield (R)-2,3-dihydroxy-isovalerate. The protein is Ketol-acid reductoisomerase (NADP(+)) of Chlorobaculum tepidum (strain ATCC 49652 / DSM 12025 / NBRC 103806 / TLS) (Chlorobium tepidum).